A 266-amino-acid chain; its full sequence is Serine/arginine-rich splicing factor 12 (266 aa).

Residues 42 to 266 (ARPRRPRAPR…SRSYHHKNSW (225 aa)) are disordered. A compositionally biased stretch (basic residues) spans 43-62 (RPRRPRAPRPRLRLRGRPGR). Residues 102–114 (KSKERHLCSPSDH) show a composition bias toward basic and acidic residues. A compositionally biased stretch (basic residues) spans 115–127 (RRSRSPSQRRSRS). The span at 133-144 (GRDRRHSDSLKE) shows a compositional bias: basic and acidic residues. Low complexity predominate over residues 151–166 (SYSQSKSRSKSLPRQS). Residues 183–194 (GRSRSKSLPKRS) are compositionally biased toward basic residues. Polar residues-rich tracts occupy residues 202-212 (SRSPQKQTGSG) and 235-244 (AYTSSGSKTQ). Positions 245-266 (TTKHSHLRSHSRSRSYHHKNSW) are enriched in basic residues.

It belongs to the splicing factor SR family.

The protein resides in the nucleus. Its function is as follows. Splicing factor that seems to antagonize SR proteins in pre-mRNA splicing regulation. In Mus musculus (Mouse), this protein is Serine/arginine-rich splicing factor 12 (Srsf12).